The chain runs to 773 residues: Immunoglobulin domain and leucine-rich repeat-containing protein 2 (773 aa).

Residues 1 to 20 form the signal peptide; it reads MRKFVFFVVAILIQIHTTTS. The Extracellular segment spans residues 21–493; the sequence is QRNRSSSPSG…DWYSYDVFNS (473 aa). 6 LRR repeats span residues 52–73, 74–96, 97–120, 122–144, 145–167, and 168–191; these read TRNI…KIYG, SNIQ…IFAP, FPQL…VIHP, LKVL…LLSI, FPKI…DTSN, and TKLK…TLRV. The N-linked (GlcNAc...) asparagine glycan is linked to N114. N204 is a glycosylation site (N-linked (GlcNAc...) asparagine). 4 LRR repeats span residues 206 to 230, 233 to 251, 252 to 275, and 296 to 319; these read STKL…DWKF, LRSL…QLDA, PLLN…ILTP, and PSTV…FIPM. The region spanning 349–479 is the Ig-like domain; the sequence is PVYAQTSIRK…GKDYGIYHFR (131 aa). Residues N361 and N379 are each glycosylated (N-linked (GlcNAc...) asparagine). C396 and C463 form a disulfide bridge. A helical membrane pass occupies residues 494–514; sequence VFWGGLATSLIVCLISFLLNI. The Cytoplasmic portion of the chain corresponds to 515 to 773; sequence TWILTRKSAL…RSPDSPPEKR (259 aa). Residues 725-773 form a disordered region; the sequence is VRPGIIPTNAPSIRFTTKPTTSSISNEASTSSPSSSGAHRSPDSPPEKR. Residues 733–745 are compositionally biased toward polar residues; the sequence is NAPSIRFTTKPTT. Residues 746 to 763 show a composition bias toward low complexity; that stretch reads SSISNEASTSSPSSSGAH. Basic and acidic residues predominate over residues 764-773; the sequence is RSPDSPPEKR.

The protein resides in the membrane. The chain is Immunoglobulin domain and leucine-rich repeat-containing protein 2 from Caenorhabditis elegans.